The chain runs to 929 residues: Bifunctional glutamine synthetase adenylyltransferase/adenylyl-removing enzyme (929 aa).

The interval 1–423 (MSTPIDSSRA…RHFEQIFAAR (423 aa)) is adenylyl removase. Residues 433 to 929 (ARIRPEQSGD…FQLWEDIFGT (497 aa)) are adenylyl transferase.

It belongs to the GlnE family. Mg(2+) serves as cofactor.

It catalyses the reaction [glutamine synthetase]-O(4)-(5'-adenylyl)-L-tyrosine + phosphate = [glutamine synthetase]-L-tyrosine + ADP. The catalysed reaction is [glutamine synthetase]-L-tyrosine + ATP = [glutamine synthetase]-O(4)-(5'-adenylyl)-L-tyrosine + diphosphate. Involved in the regulation of glutamine synthetase GlnA, a key enzyme in the process to assimilate ammonia. When cellular nitrogen levels are high, the C-terminal adenylyl transferase (AT) inactivates GlnA by covalent transfer of an adenylyl group from ATP to specific tyrosine residue of GlnA, thus reducing its activity. Conversely, when nitrogen levels are low, the N-terminal adenylyl removase (AR) activates GlnA by removing the adenylyl group by phosphorolysis, increasing its activity. The regulatory region of GlnE binds the signal transduction protein PII (GlnB) which indicates the nitrogen status of the cell. The sequence is that of Bifunctional glutamine synthetase adenylyltransferase/adenylyl-removing enzyme from Nitrosomonas europaea (strain ATCC 19718 / CIP 103999 / KCTC 2705 / NBRC 14298).